The sequence spans 217 residues: ATP-dependent Clp protease proteolytic subunit 3 (217 aa).

A compositionally biased stretch (low complexity) spans 1 to 13 (MSPFTAGPAPART). The tract at residues 1-23 (MSPFTAGPAPARTPRAEEGDTPA) is disordered. Catalysis depends on Ser108, which acts as the Nucleophile. The active site involves His133.

This sequence belongs to the peptidase S14 family. Fourteen ClpP subunits assemble into 2 heptameric rings which stack back to back to give a disk-like structure with a central cavity, resembling the structure of eukaryotic proteasomes.

It localises to the cytoplasm. The catalysed reaction is Hydrolysis of proteins to small peptides in the presence of ATP and magnesium. alpha-casein is the usual test substrate. In the absence of ATP, only oligopeptides shorter than five residues are hydrolyzed (such as succinyl-Leu-Tyr-|-NHMec, and Leu-Tyr-Leu-|-Tyr-Trp, in which cleavage of the -Tyr-|-Leu- and -Tyr-|-Trp bonds also occurs).. Functionally, cleaves peptides in various proteins in a process that requires ATP hydrolysis. Has a chymotrypsin-like activity. Plays a major role in the degradation of misfolded proteins. This is ATP-dependent Clp protease proteolytic subunit 3 from Streptomyces coelicolor (strain ATCC BAA-471 / A3(2) / M145).